The chain runs to 273 residues: 4-hydroxy-tetrahydrodipicolinate reductase (273 aa).

12-17 (GAGGRM) provides a ligand contact to NAD(+). Arg-39 is an NADP(+) binding site. NAD(+) is bound by residues 102–104 (GTT) and 126–129 (AANF). Residue His-159 is the Proton donor/acceptor of the active site. His-160 lines the (S)-2,3,4,5-tetrahydrodipicolinate pocket. The active-site Proton donor is Lys-163. 169–170 (GT) is a (S)-2,3,4,5-tetrahydrodipicolinate binding site.

It belongs to the DapB family. As to quaternary structure, homotetramer.

Its subcellular location is the cytoplasm. It catalyses the reaction (S)-2,3,4,5-tetrahydrodipicolinate + NAD(+) + H2O = (2S,4S)-4-hydroxy-2,3,4,5-tetrahydrodipicolinate + NADH + H(+). It carries out the reaction (S)-2,3,4,5-tetrahydrodipicolinate + NADP(+) + H2O = (2S,4S)-4-hydroxy-2,3,4,5-tetrahydrodipicolinate + NADPH + H(+). Its pathway is amino-acid biosynthesis; L-lysine biosynthesis via DAP pathway; (S)-tetrahydrodipicolinate from L-aspartate: step 4/4. Functionally, catalyzes the conversion of 4-hydroxy-tetrahydrodipicolinate (HTPA) to tetrahydrodipicolinate. This chain is 4-hydroxy-tetrahydrodipicolinate reductase, found in Sodalis glossinidius (strain morsitans).